Consider the following 1389-residue polypeptide: Carboxypeptidase D (1389 aa).

Positions 1–25 (MAGAARGLLWAALSLCLLPEPLRAA) are cleaved as a signal peptide. Residues 26–1308 (HIKKAEAAAA…ENRIFGLPRE (1283 aa)) are Extracellular-facing. The Peptidase M14 1 domain occupies 46–383 (RYLHAAELGQ…ESLLTFIEKV (338 aa)). A disordered region spans residues 95-133 (LPEARQDGEKKKKEEEEEEEEEEGEEGGGGALPGRPQVK). Residues 96–108 (PEARQDGEKKKKE) show a composition bias toward basic and acidic residues. The segment covering 109–120 (EEEEEEEEEGEE) has biased composition (acidic residues). Positions 139 and 142 each coordinate Zn(2+). Asn-172 is a glycosylation site (N-linked (GlcNAc...) asparagine). Residues 188-235 (ERAREGDCGGGGGGGGEGGGEPGGRENSRGRDLNRSFPDQFGSAQPDL) are disordered. Residues 195-209 (CGGGGGGGGEGGGEP) show a composition bias toward gly residues. Positions 210–221 (GGRENSRGRDLN) are enriched in basic and acidic residues. N-linked (GlcNAc...) asparagine glycosylation is present at Asn-221. Residue His-260 participates in Zn(2+) binding. Glu-353 serves as the catalytic Proton donor/acceptor. Residues Asn-402, Asn-413, Asn-432, and Asn-472 are each glycosylated (N-linked (GlcNAc...) asparagine). Positions 511–801 (RHHHFSDMEI…RSLLQFIKQV (291 aa)) constitute a Peptidase M14 2 domain. The Zn(2+) site is built by His-573 and Glu-576. Positions 614-639 (SMNPDGYEKSQEGDRGGTVGRNNSNN) are disordered. Over residues 619–628 (GYEKSQEGDR) the composition is skewed to basic and acidic residues. Asn-635 carries N-linked (GlcNAc...) asparagine glycosylation. A Zn(2+)-binding site is contributed by His-680. Glu-771 serves as the catalytic Proton donor/acceptor. 6 N-linked (GlcNAc...) asparagine glycosylation sites follow: Asn-820, Asn-876, Asn-958, Asn-981, Asn-1073, and Asn-1151. The Peptidase M14 3 domain maps to 935-1220 (RYRPYKDLSE…KSLLSMLVEV (286 aa)). Residues 1309–1329 (LVVTVAGASMSALVLTACIIW) form a helical membrane-spanning segment. S-palmitoyl cysteine attachment occurs at residues Cys-1326, Cys-1330, and Cys-1332. Over 1330–1389 (CVCSIKSNRHKDGFPTLRQHHDDYEDEIRMMSTGSKKSLLSHEFQDETDTEEETLYSSKH) the chain is Cytoplasmic. A disordered region spans residues 1367-1389 (SLLSHEFQDETDTEEETLYSSKH).

It belongs to the peptidase M14 family. As to quaternary structure, binds to pre-S, hepatitis B virus large envelope protein, via the carboxypeptidase-like domain. Zn(2+) is required as a cofactor. In terms of processing, the N-terminus is blocked. In terms of tissue distribution, expressed in liver, lung, kidney, heart, stomach, pancreas, spleen, gall bladder and intestine, but not in skeletal muscle.

The protein resides in the cell membrane. The catalysed reaction is Releases C-terminal Arg and Lys from polypeptides.. The sequence is that of Carboxypeptidase D (CPD) from Anas platyrhynchos (Mallard).